The following is a 227-amino-acid chain: 2-C-methyl-D-erythritol 4-phosphate cytidylyltransferase (227 aa).

It belongs to the IspD/TarI cytidylyltransferase family. IspD subfamily.

The catalysed reaction is 2-C-methyl-D-erythritol 4-phosphate + CTP + H(+) = 4-CDP-2-C-methyl-D-erythritol + diphosphate. The protein operates within isoprenoid biosynthesis; isopentenyl diphosphate biosynthesis via DXP pathway; isopentenyl diphosphate from 1-deoxy-D-xylulose 5-phosphate: step 2/6. In terms of biological role, catalyzes the formation of 4-diphosphocytidyl-2-C-methyl-D-erythritol from CTP and 2-C-methyl-D-erythritol 4-phosphate (MEP). This chain is 2-C-methyl-D-erythritol 4-phosphate cytidylyltransferase, found in Thermosipho melanesiensis (strain DSM 12029 / CIP 104789 / BI429).